A 278-amino-acid chain; its full sequence is HTH-type transcriptional activator RhaS (278 aa).

Residues 174–272 (NLLLAWLEDH…NWSPRDIRQG (99 aa)) form the HTH araC/xylS-type domain. 2 consecutive DNA-binding regions (H-T-H motif) follow at residues 191–212 (DAVA…KQQT) and 239–262 (VTDI…RREF).

Binds DNA as a dimer.

It localises to the cytoplasm. In terms of biological role, activates expression of the rhaBAD and rhaT operons. This chain is HTH-type transcriptional activator RhaS, found in Shigella flexneri serotype 5b (strain 8401).